Reading from the N-terminus, the 380-residue chain is MVNTVAKPEFEELRPGIKAPAKETILTPRFYTTDFEAMANMDITENKAELEAILEEFRCDYNRHHFVRDEEFEQSWDHIDGETRRLFIEFLERSCTAEFSGFLLYKELSRRLKDRNPLLAECFALMSRDEARHAGFLNKAMADFNLSLDLGFLTQHRSYTYFEPEFIFYATYLSEKIGYWRYITIYRHLEKHPEHRIYPIFRFFENWCQDENRHGDFFDAVMRAQPQMLDRPRTFWQKIKEIPLSLSGKKWARYFMVCWVPPKLWCRFFLLSVFATMYLNDLQRAKFYTALGLDAREYDREVIAKTNETAGRVFPVILDVDHPEFYQRLERCVENNAKLTEIAKQNGGFLKKLPLYLSNVWQMIKLFLIPAKEPTRVAVR.

Belongs to the AcsF family. It depends on Fe cation as a cofactor.

The enzyme catalyses Mg-protoporphyrin IX 13-monomethyl ester + 3 NADPH + 3 O2 + 2 H(+) = 3,8-divinyl protochlorophyllide a + 3 NADP(+) + 5 H2O. The protein operates within porphyrin-containing compound metabolism; chlorophyll biosynthesis (light-independent). Catalyzes the formation of the isocyclic ring in chlorophyll biosynthesis. Mediates the cyclase reaction, which results in the formation of divinylprotochlorophyllide (Pchlide) characteristic of all chlorophylls from magnesium-protoporphyrin IX 13-monomethyl ester (MgPMME). In Thermosynechococcus vestitus (strain NIES-2133 / IAM M-273 / BP-1), this protein is Magnesium-protoporphyrin IX monomethyl ester [oxidative] cyclase 1.